We begin with the raw amino-acid sequence, 181 residues long: Trafficking protein particle complex subunit 3-like protein (181 aa).

C68 carries the S-palmitoyl cysteine lipid modification.

It belongs to the TRAPP small subunits family. BET3 subfamily. Homodimer. Component of the multisubunit TRAPP (transport protein particle) complex, which includes at least TRAPPC2, TRAPPC2L, TRAPPC3, TRAPPC3L, TRAPPC4, TRAPPC5, TRAPPC8, TRAPPC9, TRAPPC10, TRAPPC11 and TRAPPC12.

The protein resides in the golgi apparatus. It is found in the cis-Golgi network. The protein localises to the endoplasmic reticulum. May play a role in vesicular transport from endoplasmic reticulum to Golgi. The polypeptide is Trafficking protein particle complex subunit 3-like protein (Trappc3l) (Mus musculus (Mouse)).